The following is a 208-amino-acid chain: ATP-dependent Clp protease proteolytic subunit (208 aa).

The active-site Nucleophile is Ser105. The active site involves His130.

This sequence belongs to the peptidase S14 family. As to quaternary structure, fourteen ClpP subunits assemble into 2 heptameric rings which stack back to back to give a disk-like structure with a central cavity, resembling the structure of eukaryotic proteasomes.

It is found in the cytoplasm. It carries out the reaction Hydrolysis of proteins to small peptides in the presence of ATP and magnesium. alpha-casein is the usual test substrate. In the absence of ATP, only oligopeptides shorter than five residues are hydrolyzed (such as succinyl-Leu-Tyr-|-NHMec, and Leu-Tyr-Leu-|-Tyr-Trp, in which cleavage of the -Tyr-|-Leu- and -Tyr-|-Trp bonds also occurs).. Cleaves peptides in various proteins in a process that requires ATP hydrolysis. Has a chymotrypsin-like activity. Plays a major role in the degradation of misfolded proteins. The sequence is that of ATP-dependent Clp protease proteolytic subunit from Xylella fastidiosa (strain M23).